The chain runs to 392 residues: MDFPGSAPSVGIEWEVALVDPETRDLVPRAAELIARMDEVHPGHKVVREFLANTVEMVSGVHDTIPEAVEDLHVQAKQLMECADDIGVNLFSAGTHPFAHWGDQKLSEKGSYQEIIERTQYWGRQMLIWGIHVHVGVGSKEKVWPIINALMTHYPHILAMSASSPAWEGLDTGYSSNRTLLYQQLPTAGMPYQFENWEQWEEFNRDQDLSGVINHTGSMHFDVRPTKYGTVETRFADATMELWELAAIAAYTHCLVVYFERRLDAGHELPTLQPWHVAENKWRAARYGLDALIITDRETNEALVTDELDAWVDRLAPLSEELGCAAELQDVRKLIARGGDYALQRAAARKHGAAPEPGTRTRGDDGVEGGFTQPEAWIAAVDLTVDSLRKSL.

Residues Ala347–Val367 form a disordered region.

The protein belongs to the glutamate--cysteine ligase type 2 family. YbdK subfamily.

The enzyme catalyses L-cysteine + L-glutamate + ATP = gamma-L-glutamyl-L-cysteine + ADP + phosphate + H(+). ATP-dependent carboxylate-amine ligase which exhibits weak glutamate--cysteine ligase activity. The protein is Putative glutamate--cysteine ligase 2 of Corynebacterium jeikeium (strain K411).